Reading from the N-terminus, the 223-residue chain is Urease accessory protein UreF (223 aa).

This sequence belongs to the UreF family. UreD, UreF and UreG form a complex that acts as a GTP-hydrolysis-dependent molecular chaperone, activating the urease apoprotein by helping to assemble the nickel containing metallocenter of UreC. The UreE protein probably delivers the nickel.

The protein localises to the cytoplasm. Required for maturation of urease via the functional incorporation of the urease nickel metallocenter. The sequence is that of Urease accessory protein UreF from Pseudomonas aeruginosa (strain LESB58).